Reading from the N-terminus, the 61-residue chain is Large ribosomal subunit protein uL30 (61 aa).

This sequence belongs to the universal ribosomal protein uL30 family. Part of the 50S ribosomal subunit.

The chain is Large ribosomal subunit protein uL30 from Neisseria meningitidis serogroup C (strain 053442).